The sequence spans 361 residues: Alanine racemase (361 aa).

K34 functions as the Proton acceptor; specific for D-alanine in the catalytic mechanism. K34 bears the N6-(pyridoxal phosphate)lysine mark. R129 is a binding site for substrate. Residue Y254 is the Proton acceptor; specific for L-alanine of the active site. Substrate is bound at residue M302.

Belongs to the alanine racemase family. Pyridoxal 5'-phosphate is required as a cofactor.

The catalysed reaction is L-alanine = D-alanine. The enzyme catalyses L-serine = D-serine. The protein operates within amino-acid biosynthesis; D-alanine biosynthesis; D-alanine from L-alanine: step 1/1. Functionally, catalyzes the interconversion of L-alanine and D-alanine. Likely plays an important role in supplying D-alanine, which is an indispensable constituent in the biosynthesis of bacterial cell-wall peptidoglycan. To a lesser extent, is also able to racemize L-serine and D-serine. Does not act on other proteinogenic amino-acids. In Vibrio cholerae serotype O1 (strain ATCC 39315 / El Tor Inaba N16961), this protein is Alanine racemase (alr1).